The following is an 81-amino-acid chain: Photosystem I iron-sulfur center (81 aa).

4Fe-4S ferredoxin-type domains are found at residues 2–31 (SHSV…MVPW) and 39–68 (IASS…IRVY). Cys-11, Cys-14, Cys-17, Cys-21, Cys-48, Cys-51, Cys-54, and Cys-58 together coordinate [4Fe-4S] cluster.

In terms of assembly, the G.violaceus PSI reaction center is composed of one copy each of PsaA,B,C,D,E,F,L,M and Z, and forms trimeric complexes. [4Fe-4S] cluster serves as cofactor.

The protein resides in the cell inner membrane. It catalyses the reaction reduced [plastocyanin] + hnu + oxidized [2Fe-2S]-[ferredoxin] = oxidized [plastocyanin] + reduced [2Fe-2S]-[ferredoxin]. Functionally, apoprotein for the two 4Fe-4S centers FA and FB of photosystem I (PSI); essential for photochemical activity. FB is the terminal electron acceptor of PSI, donating electrons to ferredoxin. The C-terminus interacts with PsaA/B/D and helps assemble the protein into the PSI complex. Required for binding of PsaD and PsaE to PSI. PSI is a plastocyanin/cytochrome c6-ferredoxin oxidoreductase, converting photonic excitation into a charge separation, which transfers an electron from the donor P700 chlorophyll pair to the spectroscopically characterized acceptors A0, A1, FX, FA and FB in turn. The chain is Photosystem I iron-sulfur center from Gloeobacter violaceus (strain ATCC 29082 / PCC 7421).